We begin with the raw amino-acid sequence, 433 residues long: F-box/kelch-repeat protein At1g24800 (433 aa).

The 49-residue stretch at 23–71 folds into the F-box domain; it reads TSMCDLPPKLVGEKILTRIPITSLRAVRSTCKLWNALTKDRVLGKAAAQ. Kelch repeat units follow at residues 170–216 and 286–337; these read HKIL…LYGV and VLYH…RFDN.

This Arabidopsis thaliana (Mouse-ear cress) protein is F-box/kelch-repeat protein At1g24800.